The sequence spans 224 residues: ATP-dependent dethiobiotin synthetase BioD (224 aa).

Residue 13-18 (NVGKTI) participates in ATP binding. Thr-17 contacts Mg(2+). The active site involves Lys-38. Position 42 (Ser-42) interacts with substrate. ATP contacts are provided by residues Asp-55, 116 to 119 (EGAG), 176 to 177 (NN), and Asn-211. Asp-55 and Glu-116 together coordinate Mg(2+).

It belongs to the dethiobiotin synthetase family. In terms of assembly, homodimer. It depends on Mg(2+) as a cofactor.

Its subcellular location is the cytoplasm. The catalysed reaction is (7R,8S)-7,8-diammoniononanoate + CO2 + ATP = (4R,5S)-dethiobiotin + ADP + phosphate + 3 H(+). Its pathway is cofactor biosynthesis; biotin biosynthesis; biotin from 7,8-diaminononanoate: step 1/2. In terms of biological role, catalyzes a mechanistically unusual reaction, the ATP-dependent insertion of CO2 between the N7 and N8 nitrogen atoms of 7,8-diaminopelargonic acid (DAPA, also called 7,8-diammoniononanoate) to form a ureido ring. This Buchnera aphidicola subsp. Acyrthosiphon pisum (strain APS) (Acyrthosiphon pisum symbiotic bacterium) protein is ATP-dependent dethiobiotin synthetase BioD.